The sequence spans 128 residues: Large ribosomal subunit protein bL12 (128 aa).

This sequence belongs to the bacterial ribosomal protein bL12 family. Homodimer. Part of the ribosomal stalk of the 50S ribosomal subunit. Forms a multimeric L10(L12)X complex, where L10 forms an elongated spine to which 2 to 4 L12 dimers bind in a sequential fashion. Binds GTP-bound translation factors.

Forms part of the ribosomal stalk which helps the ribosome interact with GTP-bound translation factors. Is thus essential for accurate translation. The sequence is that of Large ribosomal subunit protein bL12 from Thermosipho africanus (strain TCF52B).